A 464-amino-acid polypeptide reads, in one-letter code: Gamma-aminobutyric acid receptor subunit alpha-5 (464 aa).

The first 25 residues, 1 to 25 (MDNGMLSRFIMTKTLLVFCISMTLS), serve as a signal peptide directing secretion. Topologically, residues 26-260 (SHFGFSQMPT…FHLKRKIGYF (235 aa)) are extracellular. An N-linked (GlcNAc...) asparagine glycan is attached at N45. Residue R101 participates in 4-aminobutanoate binding. N145 carries N-linked (GlcNAc...) asparagine glycosylation. T164 is a binding site for 4-aminobutanoate. C173 and C187 form a disulfide bridge. N-linked (GlcNAc...) asparagine glycans are attached at residues N207 and N236. The next 3 membrane-spanning stretches (helical) occupy residues 261–281 (VIQT…SFWL), 287–308 (PART…ISAR), and 319–340 (AMDW…EFAT). The Cytoplasmic segment spans residues 341-429 (VNYFTKRGWA…TYNSISKIDK (89 aa)). K355 is covalently cross-linked (Glycyl lysine isopeptide (Lys-Gly) (interchain with G-Cter in ubiquitin)). A disordered region spans residues 382–414 (KLTHPPNIPKEQLPGGTGNAVGTASIRASEEKT). Residues 430 to 450 (MSRIVFPILFGTFNLVYWATY) traverse the membrane as a helical segment.

The protein belongs to the ligand-gated ion channel (TC 1.A.9) family. Gamma-aminobutyric acid receptor (TC 1.A.9.5) subfamily. GABRA5 sub-subfamily. Heteropentamer, formed by a combination of alpha (GABRA1-6), beta (GABRB1-3), gamma (GABRG1-3), delta (GABRD), epsilon (GABRE), rho (GABRR1-3), pi (GABRP) and theta (GABRQ) chains, each subunit exhibiting distinct physiological and pharmacological properties. In terms of tissue distribution, expressed in brain areas such as cerebral cortex, hippocampal formation and olfactory bulb granular layer.

It localises to the postsynaptic cell membrane. The protein resides in the cell membrane. It carries out the reaction chloride(in) = chloride(out). Allosterically potentiated by alphaxalone. Allosterically inhibited by pregnenolone sulfate. Inhibited by zinc and lanthanum. Functionally, alpha subunit of the heteropentameric ligand-gated chloride channel gated by gamma-aminobutyric acid (GABA), a major inhibitory neurotransmitter in the brain. GABA-gated chloride channels, also named GABA(A) receptors (GABAAR), consist of five subunits arranged around a central pore and contain GABA active binding site(s) located at the alpha and beta subunit interface(s). When activated by GABA, GABAARs selectively allow the flow of chloride anions across the cell membrane down their electrochemical gradient. GABAARs containing alpha-5/GABRA5 subunits are mainly extrasynaptic and contribute to the tonic GABAergic inhibition in the hippocampus. Extrasynaptic alpha-5-containing GABAARs in CA1 pyramidal neurons play a role in learning and memory processes. The sequence is that of Gamma-aminobutyric acid receptor subunit alpha-5 from Rattus norvegicus (Rat).